We begin with the raw amino-acid sequence, 562 residues long: 4-coumarate--CoA ligase-like 9 (562 aa).

ATP-binding residues include Ser212, Ser213, Gly214, Thr215, Thr216, and Lys220. Residue Arg281 coordinates CoA. Positions 283-352 (ELEAMFKAVE…QKFPDVDIVQ (70 aa)) are SBD1. Residues Gln352, Gly353, Thr357, Asp438, and Arg453 each coordinate ATP. Positions 353–417 (GYGLTESSGP…LRGPVIMKGY (65 aa)) are SBD2. Residues Lys461 and Ala462 each coordinate CoA. Residue Lys544 participates in ATP binding. A Microbody targeting signal motif is present at residues 560–562 (SKL).

Belongs to the ATP-dependent AMP-binding enzyme family. Requires Mg(2+) as cofactor. As to expression, expressed at low level in leaves.

The protein resides in the peroxisome. It carries out the reaction (9S,13S,15Z)-12-oxophyto-10,15-dienoate + ATP + CoA = (10Z,15Z)-12-oxophytodienoyl-CoA + AMP + diphosphate. The enzyme catalyses hexadecanoate + ATP + CoA = hexadecanoyl-CoA + AMP + diphosphate. The catalysed reaction is (9Z)-octadecenoate + ATP + CoA = (9Z)-octadecenoyl-CoA + AMP + diphosphate. It catalyses the reaction octadecanoate + ATP + CoA = octadecanoyl-CoA + AMP + diphosphate. It carries out the reaction tetradecanoate + ATP + CoA = tetradecanoyl-CoA + AMP + diphosphate. The enzyme catalyses dodecanoate + ATP + CoA = dodecanoyl-CoA + AMP + diphosphate. The catalysed reaction is decanoate + ATP + CoA = decanoyl-CoA + AMP + diphosphate. It catalyses the reaction octanoate + ATP + CoA = octanoyl-CoA + AMP + diphosphate. It carries out the reaction (9Z,12Z)-octadecadienoate + ATP + CoA = (9Z,12Z)-octadecadienoyl-CoA + AMP + diphosphate. The enzyme catalyses (9Z,12Z,15Z)-octadecatrienoate + ATP + CoA = (9Z,12Z,15Z)-octadecatrienoyl-CoA + AMP + diphosphate. The catalysed reaction is nonanoate + ATP + CoA = nonanoyl-CoA + AMP + diphosphate. In terms of biological role, contributes to jasmonic acid biosynthesis by initiating the beta-oxidative chain shortening of its precursors. Converts 12-oxo-phytodienoic acid (OPDA) into OPDA-CoA. Follows a two-step reaction mechanism, wherein the carboxylate substrate first undergoes adenylation by ATP, followed by a thioesterification in the presence of CoA to yield the final CoA thioester. The polypeptide is 4-coumarate--CoA ligase-like 9 (Arabidopsis thaliana (Mouse-ear cress)).